Reading from the N-terminus, the 240-residue chain is Small ribosomal subunit protein uS3 (240 aa).

The region spanning 39 to 109 is the KH type-2 domain; the sequence is IRQHIDANLN…QIRINVVEVN (71 aa). The interval 216–240 is disordered; that stretch reads TSAANAAPLPRRKSRRQQFEDRSEQ.

It belongs to the universal ribosomal protein uS3 family. As to quaternary structure, part of the 30S ribosomal subunit. Forms a tight complex with proteins S10 and S14.

Binds the lower part of the 30S subunit head. Binds mRNA in the 70S ribosome, positioning it for translation. The sequence is that of Small ribosomal subunit protein uS3 from Picosynechococcus sp. (strain ATCC 27264 / PCC 7002 / PR-6) (Agmenellum quadruplicatum).